The sequence spans 357 residues: UDP-N-acetylglucosamine--N-acetylmuramyl-(pentapeptide) pyrophosphoryl-undecaprenol N-acetylglucosamine transferase (357 aa).

UDP-N-acetyl-alpha-D-glucosamine-binding positions include 10–12, asparagine 124, serine 189, isoleucine 244, and glutamine 289; that span reads TGG.

Belongs to the glycosyltransferase 28 family. MurG subfamily.

Its subcellular location is the cell membrane. The catalysed reaction is Mur2Ac(oyl-L-Ala-gamma-D-Glu-L-Lys-D-Ala-D-Ala)-di-trans,octa-cis-undecaprenyl diphosphate + UDP-N-acetyl-alpha-D-glucosamine = beta-D-GlcNAc-(1-&gt;4)-Mur2Ac(oyl-L-Ala-gamma-D-Glu-L-Lys-D-Ala-D-Ala)-di-trans,octa-cis-undecaprenyl diphosphate + UDP + H(+). Its pathway is cell wall biogenesis; peptidoglycan biosynthesis. Cell wall formation. Catalyzes the transfer of a GlcNAc subunit on undecaprenyl-pyrophosphoryl-MurNAc-pentapeptide (lipid intermediate I) to form undecaprenyl-pyrophosphoryl-MurNAc-(pentapeptide)GlcNAc (lipid intermediate II). The polypeptide is UDP-N-acetylglucosamine--N-acetylmuramyl-(pentapeptide) pyrophosphoryl-undecaprenol N-acetylglucosamine transferase (Lactococcus lactis subsp. cremoris (strain MG1363)).